Reading from the N-terminus, the 346-residue chain is DNA-directed RNA polymerase subunit alpha (346 aa).

The tract at residues 1–242 (MLIQDGDKLI…DQLSVFINFD (242 aa)) is alpha N-terminal domain (alpha-NTD). Residues 258–346 (LNPNLFKSID…WLKRKEKNEA (89 aa)) are alpha C-terminal domain (alpha-CTD).

Belongs to the RNA polymerase alpha chain family. Homodimer. The RNAP catalytic core consists of 2 alpha, 1 beta, 1 beta' and 1 omega subunit. When a sigma factor is associated with the core the holoenzyme is formed, which can initiate transcription.

It catalyses the reaction RNA(n) + a ribonucleoside 5'-triphosphate = RNA(n+1) + diphosphate. Functionally, DNA-dependent RNA polymerase catalyzes the transcription of DNA into RNA using the four ribonucleoside triphosphates as substrates. This is DNA-directed RNA polymerase subunit alpha from Maridesulfovibrio salexigens (strain ATCC 14822 / DSM 2638 / NCIMB 8403 / VKM B-1763) (Desulfovibrio salexigens).